Consider the following 104-residue polypeptide: uncharacterized protein (104 aa).

This is an uncharacterized protein from Escherichia coli (Bacteriophage T4).